The sequence spans 860 residues: Linoleate 9S-lipoxygenase A (860 aa).

Residues 29 to 159 enclose the PLAT domain; the sequence is NALDFTDLAG…RYKSDRIFFA (131 aa). The 699-residue stretch at 162–860 folds into the Lipoxygenase domain; that stretch reads PYLPSETPEL…GKGIPNSVSI (699 aa). The interval 209 to 246 is disordered; the sequence is PDQGKENVRTTLGGSADYPYPRRGRTGRPPTRTDPKSE. Positions 521, 526, 712, 716, and 860 each coordinate Fe cation.

Belongs to the lipoxygenase family. As to quaternary structure, monomer. Fe cation is required as a cofactor. As to expression, expressed in germinating seeds as well as in ripening fruit.

It is found in the cytoplasm. The enzyme catalyses (9Z,12Z)-octadecadienoate + O2 = (9S)-hydroperoxy-(10E,12Z)-octadecadienoate. It participates in lipid metabolism; oxylipin biosynthesis. Functionally, plant lipoxygenase may be involved in a number of diverse aspects of plant physiology including growth and development, pest resistance, and senescence or responses to wounding. It catalyzes the hydroperoxidation of lipids containing a cis,cis-1,4-pentadiene structure. The protein is Linoleate 9S-lipoxygenase A (LOX1.1) of Solanum lycopersicum (Tomato).